A 131-amino-acid chain; its full sequence is Small ribosomal subunit protein uS8 (131 aa).

It belongs to the universal ribosomal protein uS8 family. As to quaternary structure, part of the 30S ribosomal subunit. Contacts proteins S5 and S12.

Its function is as follows. One of the primary rRNA binding proteins, it binds directly to 16S rRNA central domain where it helps coordinate assembly of the platform of the 30S subunit. The chain is Small ribosomal subunit protein uS8 from Pelagibacter ubique (strain HTCC1062).